The primary structure comprises 744 residues: Tripartite motif-containing protein 2 (744 aa).

Ser10 is modified (phosphoserine). An RING-type zinc finger spans residues 23 to 64 (CSICLERYKNPKVLPCLHTFCERCLQNYIPAHSLTLSCPVCR). The B box-type zinc-finger motif lies at 113–154 (GKPLSCPNHDGNVMEFYCQSCETAMCRECTEGEHAEHPTVPL). Cys118, His121, Cys141, and His146 together coordinate Zn(2+). The stretch at 320 to 421 (TTNAVASETV…IRGSPFKLKV (102 aa)) is one Filamin repeat. Thr371 carries the post-translational modification Phosphothreonine. Phosphoserine is present on residues Ser375, Ser424, and Ser428. The segment at 432 to 462 (EGVKRRVKSPGSGHVKQKAVKRPASMYSTGK) is disordered. 6 NHL repeats span residues 473–516 (IFRV…FSND), 520–563 (KSRF…FSSD), 564–605 (GKFK…FQPN), 609–652 (VTRF…FNQE), 656–699 (MLKF…FDGS), and 700–743 (GSFL…YRYL).

Belongs to the TRIM/RBCC family. In terms of assembly, forms homooligomers. Interacts with TRIM3; this interaction reduces TRIM2 activity. Interacts with myosin V; myosin V may not be a substrate for ubiquitination. Interacts with NEFL. Interacts with phosphorylated BCL2L11. Interacts with SIRPA. Post-translationally, RING-type zinc finger-dependent and UBE2D1-dependent autoubiquitination.

It localises to the cytoplasm. It catalyses the reaction S-ubiquitinyl-[E2 ubiquitin-conjugating enzyme]-L-cysteine + [acceptor protein]-L-lysine = [E2 ubiquitin-conjugating enzyme]-L-cysteine + N(6)-ubiquitinyl-[acceptor protein]-L-lysine.. The protein operates within protein modification; protein ubiquitination. Functionally, UBE2D1-dependent E3 ubiquitin-protein ligase that mediates the ubiquitination of NEFL and of phosphorylated BCL2L11. Plays a neuroprotective function. May play a role in neuronal rapid ischemic tolerance. Plays a role in antiviral immunity and limits New World arenavirus infection independently of its ubiquitin ligase activity. In Callithrix jacchus (White-tufted-ear marmoset), this protein is Tripartite motif-containing protein 2 (TRIM2).